A 198-amino-acid polypeptide reads, in one-letter code: Nucleoid occlusion factor SlmA (198 aa).

An HTH tetR-type domain is found at 10–70 (NRREEILQSL…SLIEFIEDSL (61 aa)). A DNA-binding region (H-T-H motif) is located at residues 33-52 (TTAKLAASVGVSEAALYRHF). Positions 119–144 (DRLQGRINQLFERIEVQLRQVMREKK) form a coiled coil.

It belongs to the nucleoid occlusion factor SlmA family. Homodimer. Interacts with FtsZ.

The protein localises to the cytoplasm. It is found in the nucleoid. Its function is as follows. Required for nucleoid occlusion (NO) phenomenon, which prevents Z-ring formation and cell division over the nucleoid. Acts as a DNA-associated cell division inhibitor that binds simultaneously chromosomal DNA and FtsZ, and disrupts the assembly of FtsZ polymers. SlmA-DNA-binding sequences (SBS) are dispersed on non-Ter regions of the chromosome, preventing FtsZ polymerization at these regions. The chain is Nucleoid occlusion factor SlmA from Klebsiella pneumoniae (strain 342).